The primary structure comprises 305 residues: NADH-cytochrome b5 reductase 1 (305 aa).

Residues 8-28 (VLLASLGVGLLTLLGVALGAY) traverse the membrane as a helical segment. The FAD-binding FR-type domain maps to 44–156 (NEKYQLRLLD…RGPSGLLTYA (113 aa)). FAD is bound by residues 136–166 (DSLK…IQPN) and 175–210 (VARN…QCFL).

Belongs to the flavoprotein pyridine nucleotide cytochrome reductase family. FAD is required as a cofactor.

The protein localises to the membrane. It carries out the reaction 2 Fe(III)-[cytochrome b5] + NADH = 2 Fe(II)-[cytochrome b5] + NAD(+) + H(+). NADH-cytochrome b5 reductases are involved in desaturation and elongation of fatty acids, cholesterol biosynthesis, drug metabolism, and, in erythrocyte, methemoglobin reduction. In Bos taurus (Bovine), this protein is NADH-cytochrome b5 reductase 1 (CYB5R1).